The primary structure comprises 120 residues: NAD(P)H-quinone oxidoreductase subunit 3 (120 aa).

3 helical membrane passes run 6 to 26 (GYDA…LALV), 64 to 84 (MFAL…PWAV), and 89 to 109 (LGLL…VALA).

The protein belongs to the complex I subunit 3 family. As to quaternary structure, NDH-1 can be composed of about 15 different subunits; different subcomplexes with different compositions have been identified which probably have different functions.

The protein resides in the cellular thylakoid membrane. It catalyses the reaction a plastoquinone + NADH + (n+1) H(+)(in) = a plastoquinol + NAD(+) + n H(+)(out). The enzyme catalyses a plastoquinone + NADPH + (n+1) H(+)(in) = a plastoquinol + NADP(+) + n H(+)(out). In terms of biological role, NDH-1 shuttles electrons from an unknown electron donor, via FMN and iron-sulfur (Fe-S) centers, to quinones in the respiratory and/or the photosynthetic chain. The immediate electron acceptor for the enzyme in this species is believed to be plastoquinone. Couples the redox reaction to proton translocation, and thus conserves the redox energy in a proton gradient. Cyanobacterial NDH-1 also plays a role in inorganic carbon-concentration. The sequence is that of NAD(P)H-quinone oxidoreductase subunit 3 from Synechococcus sp. (strain WH7803).